A 178-amino-acid chain; its full sequence is Interleukin-10 (178 aa).

The N-terminal stretch at 1–18 is a signal peptide; that stretch reads MHSSALLCCLVFLAGVAA. Intrachain disulfides connect Cys-30–Cys-126 and Cys-80–Cys-132. Asn-134 carries N-linked (GlcNAc...) asparagine glycosylation.

The protein belongs to the IL-10 family. As to quaternary structure, homodimer. Interacts with IL10RA and IL10RB.

It is found in the secreted. Its function is as follows. Major immune regulatory cytokine that acts on many cells of the immune system where it has profound anti-inflammatory functions, limiting excessive tissue disruption caused by inflammation. Mechanistically, IL10 binds to its heterotetrameric receptor comprising IL10RA and IL10RB leading to JAK1 and STAT2-mediated phosphorylation of STAT3. In turn, STAT3 translocates to the nucleus where it drives expression of anti-inflammatory mediators. Targets antigen-presenting cells (APCs) such as macrophages and monocytes and inhibits their release of pro-inflammatory cytokines including granulocyte-macrophage colony-stimulating factor /GM-CSF, granulocyte colony-stimulating factor/G-CSF, IL-1 alpha, IL-1 beta, IL-6, IL-8 and TNF-alpha. Also interferes with antigen presentation by reducing the expression of MHC-class II and co-stimulatory molecules, thereby inhibiting their ability to induce T cell activation. In addition, controls the inflammatory response of macrophages by reprogramming essential metabolic pathways including mTOR signaling. The polypeptide is Interleukin-10 (IL10) (Bos taurus (Bovine)).